The primary structure comprises 335 residues: Holliday junction branch migration complex subunit RuvB (335 aa).

Positions 4–184 (ADRIISGQAK…FGIVQRLEFY (181 aa)) are large ATPase domain (RuvB-L). ATP-binding positions include Ile23, Arg24, Gly65, Lys68, Thr69, Thr70, 131–133 (EDY), Arg174, Tyr184, and Arg221. Thr69 lines the Mg(2+) pocket. A small ATPAse domain (RuvB-S) region spans residues 185-255 (SVEDLTSIVA…VAKQALSMLD (71 aa)). A head domain (RuvB-H) region spans residues 258–335 (DAGFDYLDRK…RHFGLQKLSD (78 aa)). 3 residues coordinate DNA: Arg294, Arg313, and Arg318.

It belongs to the RuvB family. As to quaternary structure, homohexamer. Forms an RuvA(8)-RuvB(12)-Holliday junction (HJ) complex. HJ DNA is sandwiched between 2 RuvA tetramers; dsDNA enters through RuvA and exits via RuvB. An RuvB hexamer assembles on each DNA strand where it exits the tetramer. Each RuvB hexamer is contacted by two RuvA subunits (via domain III) on 2 adjacent RuvB subunits; this complex drives branch migration. In the full resolvosome a probable DNA-RuvA(4)-RuvB(12)-RuvC(2) complex forms which resolves the HJ.

It is found in the cytoplasm. The enzyme catalyses ATP + H2O = ADP + phosphate + H(+). Its function is as follows. The RuvA-RuvB-RuvC complex processes Holliday junction (HJ) DNA during genetic recombination and DNA repair, while the RuvA-RuvB complex plays an important role in the rescue of blocked DNA replication forks via replication fork reversal (RFR). RuvA specifically binds to HJ cruciform DNA, conferring on it an open structure. The RuvB hexamer acts as an ATP-dependent pump, pulling dsDNA into and through the RuvAB complex. RuvB forms 2 homohexamers on either side of HJ DNA bound by 1 or 2 RuvA tetramers; 4 subunits per hexamer contact DNA at a time. Coordinated motions by a converter formed by DNA-disengaged RuvB subunits stimulates ATP hydrolysis and nucleotide exchange. Immobilization of the converter enables RuvB to convert the ATP-contained energy into a lever motion, pulling 2 nucleotides of DNA out of the RuvA tetramer per ATP hydrolyzed, thus driving DNA branch migration. The RuvB motors rotate together with the DNA substrate, which together with the progressing nucleotide cycle form the mechanistic basis for DNA recombination by continuous HJ branch migration. Branch migration allows RuvC to scan DNA until it finds its consensus sequence, where it cleaves and resolves cruciform DNA. This Haemophilus influenzae (strain 86-028NP) protein is Holliday junction branch migration complex subunit RuvB.